The chain runs to 207 residues: Guanylate kinase (207 aa).

One can recognise a Guanylate kinase-like domain in the interval 6–185 (GLLIVLSGPS…AKNRIQSIVE (180 aa)). 13-20 (GPSGVGKG) contributes to the ATP binding site.

The protein belongs to the guanylate kinase family.

The protein resides in the cytoplasm. It carries out the reaction GMP + ATP = GDP + ADP. Functionally, essential for recycling GMP and indirectly, cGMP. The polypeptide is Guanylate kinase (Staphylococcus epidermidis (strain ATCC 12228 / FDA PCI 1200)).